Consider the following 279-residue polypeptide: 3-methyl-2-oxobutanoate hydroxymethyltransferase (279 aa).

Asp-43 and Asp-82 together coordinate Mg(2+). 3-methyl-2-oxobutanoate contacts are provided by residues 43-44, Asp-82, and Lys-112; that span reads DS. Glu-114 contacts Mg(2+). Residue Glu-181 is the Proton acceptor of the active site.

This sequence belongs to the PanB family. Homodecamer; pentamer of dimers. Mg(2+) serves as cofactor.

It localises to the cytoplasm. The catalysed reaction is 3-methyl-2-oxobutanoate + (6R)-5,10-methylene-5,6,7,8-tetrahydrofolate + H2O = 2-dehydropantoate + (6S)-5,6,7,8-tetrahydrofolate. Its pathway is cofactor biosynthesis; (R)-pantothenate biosynthesis; (R)-pantoate from 3-methyl-2-oxobutanoate: step 1/2. Functionally, catalyzes the reversible reaction in which hydroxymethyl group from 5,10-methylenetetrahydrofolate is transferred onto alpha-ketoisovalerate to form ketopantoate. The sequence is that of 3-methyl-2-oxobutanoate hydroxymethyltransferase from Shouchella clausii (strain KSM-K16) (Alkalihalobacillus clausii).